Consider the following 636-residue polypeptide: Threonine--tRNA ligase (636 aa).

Positions 1–61 (MPVITLPDGS…TQDASLQLIT (61 aa)) constitute a TGS domain. Positions 243–534 (DHRKIGKTLD…LIEEFTGKFP (292 aa)) are catalytic. Cys334, His385, and His511 together coordinate Zn(2+).

It belongs to the class-II aminoacyl-tRNA synthetase family. In terms of assembly, homodimer. Zn(2+) serves as cofactor.

Its subcellular location is the cytoplasm. The enzyme catalyses tRNA(Thr) + L-threonine + ATP = L-threonyl-tRNA(Thr) + AMP + diphosphate + H(+). Its function is as follows. Catalyzes the attachment of threonine to tRNA(Thr) in a two-step reaction: L-threonine is first activated by ATP to form Thr-AMP and then transferred to the acceptor end of tRNA(Thr). Also edits incorrectly charged L-seryl-tRNA(Thr). This is Threonine--tRNA ligase from Colwellia psychrerythraea (strain 34H / ATCC BAA-681) (Vibrio psychroerythus).